Here is a 122-residue protein sequence, read N- to C-terminus: MSNYRYSKLNEEEISLEDMPSSANQILTRQEQIIQEQDDELELVGNSVRTLRGMSSMIGDELDQQSTMLDDLGQEMEYSETRLDTAMKKMAKLTHLEDESSQCKMIMVLSALLFFLVFVLLV.

Topologically, residues 1–100 are cytoplasmic; that stretch reads MSNYRYSKLN…AKLTHLEDES (100 aa). The region spanning 31–93 is the t-SNARE coiled-coil homology domain; sequence EQIIQEQDDE…DTAMKKMAKL (63 aa). Residues 101 to 121 traverse the membrane as a helical; Anchor for type IV membrane protein segment; the sequence is SQCKMIMVLSALLFFLVFVLL. Val-122 is a topological domain (extracellular).

Belongs to the syntaxin family.

It is found in the membrane. Its function is as follows. SNARE promoting movement of transport vesicles to target membranes. Potentially functions in retrograde trafficking and in the endocytic recycling pathway. This is Putative syntaxin 6 (syx-6) from Caenorhabditis elegans.